A 501-amino-acid chain; its full sequence is Pyruvate kinase 1 (501 aa).

Residue arginine 50 participates in substrate binding. K(+) is bound by residues asparagine 52, serine 54, aspartate 85, and threonine 86. Residue 52-55 (NFSH) participates in ATP binding. Arginine 92 and lysine 178 together coordinate ATP. Glutamate 243 is a binding site for Mg(2+). Substrate-binding residues include glycine 266, aspartate 267, and threonine 299. Aspartate 267 is a Mg(2+) binding site.

This sequence belongs to the pyruvate kinase family. Homotetramer. Requires Mg(2+) as cofactor. K(+) is required as a cofactor.

It catalyses the reaction pyruvate + ATP = phosphoenolpyruvate + ADP + H(+). It participates in carbohydrate degradation; glycolysis; pyruvate from D-glyceraldehyde 3-phosphate: step 5/5. This Candida glabrata (strain ATCC 2001 / BCRC 20586 / JCM 3761 / NBRC 0622 / NRRL Y-65 / CBS 138) (Yeast) protein is Pyruvate kinase 1 (PYK1).